The sequence spans 422 residues: ATP phosphoribosyltransferase regulatory subunit (422 aa).

It belongs to the class-II aminoacyl-tRNA synthetase family. HisZ subfamily. In terms of assembly, heteromultimer composed of HisG and HisZ subunits.

It localises to the cytoplasm. Its pathway is amino-acid biosynthesis; L-histidine biosynthesis; L-histidine from 5-phospho-alpha-D-ribose 1-diphosphate: step 1/9. Its function is as follows. Required for the first step of histidine biosynthesis. May allow the feedback regulation of ATP phosphoribosyltransferase activity by histidine. This Clostridium botulinum (strain 657 / Type Ba4) protein is ATP phosphoribosyltransferase regulatory subunit.